The primary structure comprises 186 residues: UPF0301 protein PM1869 (186 aa).

This sequence belongs to the UPF0301 (AlgH) family.

The protein is UPF0301 protein PM1869 of Pasteurella multocida (strain Pm70).